A 142-amino-acid polypeptide reads, in one-letter code: FAD synthase (142 aa).

Residues 9–10, 14–17, and aspartate 92 each bind ATP; these read TF and HPGH.

The protein belongs to the archaeal FAD synthase family. Homodimer. A divalent metal cation is required as a cofactor.

It carries out the reaction FMN + ATP + H(+) = FAD + diphosphate. The protein operates within cofactor biosynthesis; FAD biosynthesis; FAD from FMN: step 1/1. Its function is as follows. Catalyzes the transfer of the AMP portion of ATP to flavin mononucleotide (FMN) to produce flavin adenine dinucleotide (FAD) coenzyme. This chain is FAD synthase, found in Halalkalicoccus jeotgali (strain DSM 18796 / CECT 7217 / JCM 14584 / KCTC 4019 / B3).